Consider the following 733-residue polypeptide: SWR1-complex protein 4 (733 aa).

Disordered stretches follow at residues 1 to 34 and 98 to 128; these read MTSH…RPNL and PDGT…DSSF. One can recognise an SANT domain in the interval 146-217; it reads NTNLKHPDWT…DLKARYYEVA (72 aa). Positions 247–299 form a coiled coil; the sequence is KQEQNRKRFAENTLKRSSDEAREEEALLLEIKRIMARTERFNEERRELYNRLD. The span at 371–384 shows a compositional bias: low complexity; the sequence is AASRRESLAASSTA. Disordered regions lie at residues 371 to 488 and 564 to 733; these read AASR…GSGP and KKAE…KQKK. Basic and acidic residues-rich tracts occupy residues 387–423, 463–484, 564–589, and 610–653; these read NDHH…DRHG, PERR…HDRL, KKAE…KGGE, and DDAK…KGEE. The segment covering 699–710 has biased composition (low complexity); the sequence is GSSSGAGASSGA.

This sequence belongs to the SWC4 family. In terms of assembly, component of the SWR1 chromatin-remodeling complex and of the NuA4 histone acetyltransferase complex.

The protein resides in the nucleus. Functionally, component of the SWR1 complex which mediates the ATP-dependent exchange of histone H2A for the H2A variant H2A.Z leading to transcriptional regulation of selected genes by chromatin remodeling. Component of the NuA4 histone acetyltransferase complex which is involved in transcriptional activation of selected genes principally by acetylation of nucleosomal histone H4 and H2A. The NuA4 complex is also involved in DNA repair. This Neurospora crassa (strain ATCC 24698 / 74-OR23-1A / CBS 708.71 / DSM 1257 / FGSC 987) protein is SWR1-complex protein 4 (crc-1).